Consider the following 155-residue polypeptide: MVRKVLMICLGNICRSPIAEVVMVDTLEKANVKDVEVDSAAIGGWHVGNRADPRAISTLQKHGLKCTHIVRQIRKQDFSEFDYIFGMDEDNMSELRRLAPKGSKAELLMLGDFGLEKKNRIIEDPYYERGAEGFETAYQQCVVACAAFMKERLQK.

Catalysis depends on C9, which acts as the Nucleophile. Residue R15 is part of the active site. The Proton donor role is filled by D124.

This sequence belongs to the low molecular weight phosphotyrosine protein phosphatase family. Cone cells and primary pigment cells in developing pupal retina.

It localises to the cytoplasm. It carries out the reaction O-phospho-L-tyrosyl-[protein] + H2O = L-tyrosyl-[protein] + phosphate. It catalyses the reaction a phosphate monoester + H2O = an alcohol + phosphate. Its function is as follows. Acts on tyrosine phosphorylated proteins, low-MW aryl phosphates and natural and synthetic acyl phosphates. This is Low molecular weight phosphotyrosine protein phosphatase 1 (primo-1) from Drosophila melanogaster (Fruit fly).